Reading from the N-terminus, the 371-residue chain is Assembly protein G7 (371 aa).

The protein belongs to the chordopoxvirinae G7 family. In terms of assembly, part of a complex composed of A30, G7, F10 kinase, A15, D2, D3, and J1. In terms of processing, phosphorylated on serines by F10 kinase, phosphorylation state is regulated by H1 phosphatase. Undergoes proteolytic processing during morphogenesis, probably required for the transformation of immature virions (IV) into mature virions (MV).

Its subcellular location is the host cytoplasm. The protein localises to the virion. Late protein which is a part of a large complex required for early virion morphogenesis. This complex participates in the formation of virosomes and the incorporation of virosomal contents into nascent immature virions. The protein is Assembly protein G7 of Vaccinia virus (strain Copenhagen) (VACV).